The following is a 95-amino-acid chain: MSDSLWHLYLLRTASGMLYTGITTDVARRLAQHQAGKGAKALRGKGELTLVFHCEAGDRSTALKLEYRVKQLSKQQKEKLVIDQPRLLTTLFLAS.

The 76-residue stretch at 4-79 (SLWHLYLLRT…KQLSKQQKEK (76 aa)) folds into the GIY-YIG domain.

This sequence belongs to the UPF0213 family.

The protein is UPF0213 protein YPK_3712 of Yersinia pseudotuberculosis serotype O:3 (strain YPIII).